The following is a 193-amino-acid chain: dCTP deaminase (193 aa).

DCTP is bound by residues 110–115, Asp128, 136–138, Tyr171, Lys178, and Gln182; these read RSSLAR and VLE. Catalysis depends on Glu138, which acts as the Proton donor/acceptor.

This sequence belongs to the dCTP deaminase family. As to quaternary structure, homotrimer.

The enzyme catalyses dCTP + H2O + H(+) = dUTP + NH4(+). Its pathway is pyrimidine metabolism; dUMP biosynthesis; dUMP from dCTP (dUTP route): step 1/2. Functionally, catalyzes the deamination of dCTP to dUTP. The protein is dCTP deaminase of Tolumonas auensis (strain DSM 9187 / NBRC 110442 / TA 4).